The chain runs to 477 residues: Bifunctional protein HldE (477 aa).

The segment at 1 to 318 (MKVTLPEFER…ENAVRGRAET (318 aa)) is ribokinase. An ATP-binding site is contributed by 195-198 (NLSE). Residue D264 is part of the active site. Residues 344–477 (MTNGVFDILH…IKKIQKDSDK (134 aa)) form a cytidylyltransferase region.

The protein in the N-terminal section; belongs to the carbohydrate kinase PfkB family. In the C-terminal section; belongs to the cytidylyltransferase family. As to quaternary structure, homodimer.

It catalyses the reaction D-glycero-beta-D-manno-heptose 7-phosphate + ATP = D-glycero-beta-D-manno-heptose 1,7-bisphosphate + ADP + H(+). It carries out the reaction D-glycero-beta-D-manno-heptose 1-phosphate + ATP + H(+) = ADP-D-glycero-beta-D-manno-heptose + diphosphate. The protein operates within nucleotide-sugar biosynthesis; ADP-L-glycero-beta-D-manno-heptose biosynthesis; ADP-L-glycero-beta-D-manno-heptose from D-glycero-beta-D-manno-heptose 7-phosphate: step 1/4. It participates in nucleotide-sugar biosynthesis; ADP-L-glycero-beta-D-manno-heptose biosynthesis; ADP-L-glycero-beta-D-manno-heptose from D-glycero-beta-D-manno-heptose 7-phosphate: step 3/4. Functionally, catalyzes the phosphorylation of D-glycero-D-manno-heptose 7-phosphate at the C-1 position to selectively form D-glycero-beta-D-manno-heptose-1,7-bisphosphate. Its function is as follows. Catalyzes the ADP transfer from ATP to D-glycero-beta-D-manno-heptose 1-phosphate, yielding ADP-D-glycero-beta-D-manno-heptose. The chain is Bifunctional protein HldE from Klebsiella pneumoniae (strain 342).